We begin with the raw amino-acid sequence, 352 residues long: A-type ATP synthase subunit C (352 aa).

The protein belongs to the V-ATPase V0D/AC39 subunit family. Has multiple subunits with at least A(3), B(3), C, D, E, F, H, I and proteolipid K(x).

Its subcellular location is the cell membrane. Functionally, component of the A-type ATP synthase that produces ATP from ADP in the presence of a proton gradient across the membrane. The polypeptide is A-type ATP synthase subunit C (Halobacterium salinarum (strain ATCC 29341 / DSM 671 / R1)).